A 214-amino-acid chain; its full sequence is Large ribosomal subunit protein uL1 (214 aa).

This sequence belongs to the universal ribosomal protein uL1 family. Part of the 50S ribosomal subunit.

In terms of biological role, binds directly to 23S rRNA. Probably involved in E site tRNA release. Functionally, protein L1 is also a translational repressor protein, it controls the translation of its operon by binding to its mRNA. This is Large ribosomal subunit protein uL1 from Methanopyrus kandleri (strain AV19 / DSM 6324 / JCM 9639 / NBRC 100938).